Consider the following 343-residue polypeptide: MKVSIIGATGYGGLELIRLLHQHSSVDIATLHSFSAQAETLATFYPHLKDLAVSPLEKINPTEIIEKSDTVFIATPSGIAKDIALPYVDAGLNVIDLSGDFRLKDRQLYEKWYGKSAAPTEYIGKAEYGLAEFREKKETTFIANPGCYATATLLGLAPLATNKLIDPTSIIVDAKSGISGAGKVPSASTHFTETNENMTLYKMNSHQHIPEIMQQLTKWDESIPAIQFSTSLIPITRGIFTTIYVKPKNPITQKELHKLYESTYDNAPFVRIQPENVYPTVKQVTASNYCDIGLAYNEKTNVITIVSVIDNLVKGAAGQAIQNLNIMANFAESDGLRFIPVYP.

Cysteine 147 is an active-site residue.

It belongs to the NAGSA dehydrogenase family. Type 1 subfamily.

It is found in the cytoplasm. The enzyme catalyses N-acetyl-L-glutamate 5-semialdehyde + phosphate + NADP(+) = N-acetyl-L-glutamyl 5-phosphate + NADPH + H(+). The protein operates within amino-acid biosynthesis; L-arginine biosynthesis; N(2)-acetyl-L-ornithine from L-glutamate: step 3/4. Catalyzes the NADPH-dependent reduction of N-acetyl-5-glutamyl phosphate to yield N-acetyl-L-glutamate 5-semialdehyde. This is N-acetyl-gamma-glutamyl-phosphate reductase from Listeria monocytogenes serovar 1/2a (strain ATCC BAA-679 / EGD-e).